Consider the following 208-residue polypeptide: MSLPEPLRRRLGSFSRTVFTDSRRAGPQYPSERADNEILSSLPLQMSLYFNVYFFPFWWLSTVFMLQLKYPVLSDYYKFILVTVMILTSLIEVIRLYLGYMGNLQEKVPELAGFWLLTLLLQLPVILFLLFNEGLNIQPLERSVNIIFALFLVFQVIAAFVTLKRMVNKLATHFHLNEFDRLEEHPVRHLYGPSKEENVLPMASMGPC.

The next 4 helical transmembrane spans lie at 46–66 (MSLY…VFML), 79–99 (FILV…LYLG), 111–131 (LAGF…FLLF), and 143–163 (SVNI…FVTL).

It belongs to the TMEM17 family. As to quaternary structure, part of the tectonic-like complex (also named B9 complex).

It localises to the cell projection. The protein localises to the cilium membrane. Functionally, transmembrane component of the tectonic-like complex, a complex localized at the transition zone of primary cilia and acting as a barrier that prevents diffusion of transmembrane proteins between the cilia and plasma membranes. Required for ciliogenesis and sonic hedgehog/SHH signaling. The polypeptide is Transmembrane protein 17 (TMEM17) (Gallus gallus (Chicken)).